The sequence spans 126 residues: Aspartate 1-decarboxylase (126 aa).

The active-site Schiff-base intermediate with substrate; via pyruvic acid is serine 25. Serine 25 is subject to Pyruvic acid (Ser). Threonine 57 contributes to the substrate binding site. Tyrosine 58 (proton donor) is an active-site residue. 73–75 contributes to the substrate binding site; it reads GGA.

It belongs to the PanD family. In terms of assembly, heterooctamer of four alpha and four beta subunits. It depends on pyruvate as a cofactor. In terms of processing, is synthesized initially as an inactive proenzyme, which is activated by self-cleavage at a specific serine bond to produce a beta-subunit with a hydroxyl group at its C-terminus and an alpha-subunit with a pyruvoyl group at its N-terminus.

It is found in the cytoplasm. It catalyses the reaction L-aspartate + H(+) = beta-alanine + CO2. The protein operates within cofactor biosynthesis; (R)-pantothenate biosynthesis; beta-alanine from L-aspartate: step 1/1. Functionally, catalyzes the pyruvoyl-dependent decarboxylation of aspartate to produce beta-alanine. In Xanthomonas axonopodis pv. citri (strain 306), this protein is Aspartate 1-decarboxylase.